We begin with the raw amino-acid sequence, 282 residues long: Phosphatidylserine decarboxylase proenzyme (282 aa).

Catalysis depends on charge relay system; for autoendoproteolytic cleavage activity residues Asp-85, His-142, and Ser-244. The active-site Schiff-base intermediate with substrate; via pyruvic acid; for decarboxylase activity is Ser-244. Ser-244 is subject to Pyruvic acid (Ser); by autocatalysis.

Belongs to the phosphatidylserine decarboxylase family. PSD-B subfamily. Prokaryotic type I sub-subfamily. As to quaternary structure, heterodimer of a large membrane-associated beta subunit and a small pyruvoyl-containing alpha subunit. It depends on pyruvate as a cofactor. Post-translationally, is synthesized initially as an inactive proenzyme. Formation of the active enzyme involves a self-maturation process in which the active site pyruvoyl group is generated from an internal serine residue via an autocatalytic post-translational modification. Two non-identical subunits are generated from the proenzyme in this reaction, and the pyruvate is formed at the N-terminus of the alpha chain, which is derived from the carboxyl end of the proenzyme. The autoendoproteolytic cleavage occurs by a canonical serine protease mechanism, in which the side chain hydroxyl group of the serine supplies its oxygen atom to form the C-terminus of the beta chain, while the remainder of the serine residue undergoes an oxidative deamination to produce ammonia and the pyruvoyl prosthetic group on the alpha chain. During this reaction, the Ser that is part of the protease active site of the proenzyme becomes the pyruvoyl prosthetic group, which constitutes an essential element of the active site of the mature decarboxylase.

The protein resides in the cell membrane. It catalyses the reaction a 1,2-diacyl-sn-glycero-3-phospho-L-serine + H(+) = a 1,2-diacyl-sn-glycero-3-phosphoethanolamine + CO2. It participates in phospholipid metabolism; phosphatidylethanolamine biosynthesis; phosphatidylethanolamine from CDP-diacylglycerol: step 2/2. Its function is as follows. Catalyzes the formation of phosphatidylethanolamine (PtdEtn) from phosphatidylserine (PtdSer). In Coxiella burnetii (strain Dugway 5J108-111), this protein is Phosphatidylserine decarboxylase proenzyme.